Here is a 321-residue protein sequence, read N- to C-terminus: Phospholipid phosphatase-related protein type 5 (321 aa).

A run of 6 helical transmembrane segments spans residues 6-26 (VALISSMLYFQMVIMAGTVML), 62-82 (AVPPVLLYSLAAGVPVLVIIV), 122-142 (FLGIYAFGLFATDIFVNAGQV), 196-213 (AALSVYAATYLTMYITST), 225-245 (VLCLGLMCLAFLTGLNRVAEY), and 252-272 (VIAGFLVGISIAVFLVVCVVN).

It belongs to the PA-phosphatase related phosphoesterase family.

Its subcellular location is the cell membrane. Functionally, induces filopodia formation and promotes neurite growth in a CDC42-independent manner; impedes neurite growth inhibitory-mediated axonal retraction. The chain is Phospholipid phosphatase-related protein type 5 from Mus musculus (Mouse).